Consider the following 57-residue polypeptide: Small polypeptide DEVIL 20 (57 aa).

An N-linked (GlcNAc...) asparagine glycan is attached at Asn-5. Positions 16 to 47 (TFKAKCSHMVRKQRAKFYILGRCLAMLVCGRG) are required for DVL/RTFL small polypeptide activity. A helical transmembrane segment spans residues 29–45 (RAKFYILGRCLAMLVCG).

This sequence belongs to the DVL/RTFL small polypeptides family.

The protein resides in the cell membrane. Small polypeptide acting as a regulatory molecule which coordinates cellular responses required for differentiation, growth and development, probably by restricting polar cell proliferation in lateral organs and coordinating socket cell recruitment and differentiation at trichome sites. In Arabidopsis thaliana (Mouse-ear cress), this protein is Small polypeptide DEVIL 20.